Consider the following 1359-residue polypeptide: Junctional cadherin 5-associated protein (1359 aa).

Disordered regions lie at residues 1 to 147 (MYSV…SLPV), 249 to 411 (PLNE…PAHP), 454 to 554 (NSSP…TCET), 591 to 813 (SHLP…CNSK), 840 to 1076 (KELQ…TIEI), 1105 to 1141 (RAGQ…PRVS), 1157 to 1207 (PLFV…KDVE), 1225 to 1260 (SVAG…DRLM), and 1276 to 1359 (FRNA…VERV). Residues 15-28 (LSRDPPASREDNPK) show a composition bias toward basic and acidic residues. 2 stretches are compositionally biased toward polar residues: residues 82 to 91 (PQSTSASRTS) and 98 to 112 (QPPS…TGND). Basic and acidic residues predominate over residues 120-135 (RQEARSQKPREHENLE). Residues 302–321 (QQSRGGADSSDSQDSQQMDA) show a composition bias toward low complexity. Pro residues predominate over residues 335–353 (LEPPVYVPPPSYRSPPQNI). The span at 539 to 554 (RQVSSPYSQGESTCET) shows a compositional bias: polar residues. Over residues 591–613 (SHLPDRDMDNNDLKPSADQKNGS) the composition is skewed to basic and acidic residues. 3 stretches are compositionally biased toward polar residues: residues 619–632 (LQEQ…STDL), 689–704 (QQTQ…SSQL), and 756–773 (LSPS…SVDQ). Over residues 849 to 859 (SSSSSSSSSSS) the composition is skewed to low complexity. A compositionally biased stretch (basic and acidic residues) spans 868 to 880 (QENRAHCRQEDVG). A compositionally biased stretch (polar residues) spans 1003–1013 (PKITSAFSSVK). A phosphoserine mark is found at Ser1044 and Ser1050. Ser1194 is modified (phosphoserine). Position 1281 is a phosphoserine (Ser1281). The segment covering 1324–1342 (SISREEKEHPAAQKEKSMD) has biased composition (basic and acidic residues).

The protein resides in the cell junction. It localises to the adherens junction. This Homo sapiens (Human) protein is Junctional cadherin 5-associated protein.